Consider the following 272-residue polypeptide: MARLAAFDMDGTLLMPDHHLGEKTLSTLARLRERDITLTFATGRHALEMQHILGALSLDAYLITGNGTRVHSLEGELLHRDDLPADVAELVLYQQWDTRASMHIFNDDGWFTGKEIPALLQAFVYSGFRYQIIDVKKMPLGSVTKICFCGDHDDLTRLQIQLYEALGERAHLCFSATDCLEVLPVGCNKGAALTVLTQHLGLSLRDCMAFGDAMNDREMLGCVGSGFIMGNAMPQLRAELPHLPVIGHCRNQAVSHYLTHWLDYPHLPYSPE.

Catalysis depends on aspartate 8, which acts as the Nucleophile. Mg(2+)-binding residues include aspartate 8, aspartate 10, and aspartate 212.

The protein belongs to the HAD-like hydrolase superfamily. Cof family. Mg(2+) serves as cofactor.

It catalyses the reaction 4-amino-2-methyl-5-(diphosphooxymethyl)pyrimidine + H2O = 4-amino-2-methyl-5-(phosphooxymethyl)pyrimidine + phosphate + H(+). Functionally, catalyzes the hydrolysis of 4-amino-2-methyl-5-hydroxymethylpyrimidine pyrophosphate (HMP-PP) to 4-amino-2-methyl-5-hydroxymethylpyrimidine phosphate (HMP-P). This Escherichia coli O8 (strain IAI1) protein is HMP-PP phosphatase.